The primary structure comprises 443 residues: Signal recognition particle 54 kDa protein (443 aa).

GTP is bound by residues 107-114 (GVQGSGKT), 189-193 (DTAGR), and 247-250 (TKLD).

It belongs to the GTP-binding SRP family. SRP54 subfamily. In terms of assembly, part of the signal recognition particle protein translocation system, which is composed of SRP and FtsY. Archaeal SRP consists of a 7S RNA molecule of 300 nucleotides and two protein subunits: SRP54 and SRP19.

Its subcellular location is the cytoplasm. It carries out the reaction GTP + H2O = GDP + phosphate + H(+). Its function is as follows. Involved in targeting and insertion of nascent membrane proteins into the cytoplasmic membrane. Binds to the hydrophobic signal sequence of the ribosome-nascent chain (RNC) as it emerges from the ribosomes. The SRP-RNC complex is then targeted to the cytoplasmic membrane where it interacts with the SRP receptor FtsY. The sequence is that of Signal recognition particle 54 kDa protein from Pyrococcus horikoshii (strain ATCC 700860 / DSM 12428 / JCM 9974 / NBRC 100139 / OT-3).